A 234-amino-acid polypeptide reads, in one-letter code: MIKIGASILSADFGHLREEIKKAEEAGVDFFHVDMMDGHFVPNISMGIGIAKHVKKLTELPVEVHLMVENVDLFVNEFEEMDYITFHIEAVKFPFRIINRIKSIGAKPIVALNPATPLDAIEYILGDVYAVLVMTVEPGFSGQKFIPVMTKKIRKLKSMIVENGYDTKIFVDGGINVETAPLAVKAGADVLVAASAIFGKDDVKTAVKNLREAALEALNKDFLTKSFNSNEEKQ.

Position 7 (Ser-7) interacts with substrate. The a divalent metal cation site is built by His-32, Asp-34, and His-65. Asp-34 serves as the catalytic Proton acceptor. Residues His-65, 139–142 (GFSG), 172–174 (DGG), and 194–195 (AS) contribute to the substrate site. Asp-172 provides a ligand contact to a divalent metal cation. Asp-172 acts as the Proton donor in catalysis.

It belongs to the ribulose-phosphate 3-epimerase family. A divalent metal cation serves as cofactor.

It carries out the reaction D-ribulose 5-phosphate = D-xylulose 5-phosphate. It participates in carbohydrate degradation. Catalyzes the reversible epimerization of D-ribulose 5-phosphate to D-xylulose 5-phosphate. This is Ribulose-phosphate 3-epimerase from Methanocaldococcus jannaschii (strain ATCC 43067 / DSM 2661 / JAL-1 / JCM 10045 / NBRC 100440) (Methanococcus jannaschii).